Here is a 94-residue protein sequence, read N- to C-terminus: UPF0298 protein SZO_03600 (94 aa).

It belongs to the UPF0298 family.

It is found in the cytoplasm. This Streptococcus equi subsp. zooepidemicus (strain H70) protein is UPF0298 protein SZO_03600.